Here is a 676-residue protein sequence, read N- to C-terminus: Envelope glycoprotein (676 aa).

The signal sequence occupies residues 1 to 32 (MEGLSLLQLPRDKFRKSSFFVWVIILFQKAFS). Residues 33–650 (MPLGVVTNST…DDNWWTGWRQ (618 aa)) are Extracellular-facing. N40 carries N-linked (GlcNAc...) asparagine; by host glycosylation. Cystine bridges form between C53–C609, C108–C135, C121–C147, C511–C556, and C601–C608. The segment at 54-201 (KDHLASTDQL…TFLQSPPIRE (148 aa)) is receptor-binding. N-linked (GlcNAc...) asparagine; by host glycosylation is found at N204, N208, N238, N257, N268, N296, and N314. The interval 305–485 (ELSFETLSLN…STSNGLITST (181 aa)) is mucin-like region. A disordered region spans residues 313-351 (LNETEDDDATSSRTTKGRISDRATRKYSDLVPKDSPGMV). Over residues 330-344 (RISDRATRKYSDLVP) the composition is skewed to basic and acidic residues. The N-linked (GlcNAc...) asparagine; by host glycan is linked to N366. Residues 406–458 (SSSQILSSSPTMAPSPETQTSTTYTPKLPVMTTEESTTPPRNSPGSTTEAPTL) form a disordered region. 2 stretches are compositionally biased toward polar residues: residues 415–430 (PTMAPSPETQTSTTYT) and 438–458 (TEESTTPPRNSPGSTTEAPTL). N-linked (GlcNAc...) asparagine; by host glycosylation occurs at N463. Residues 524-539 (HNAAGIAWIPYFGPGA) form a fusion peptide region. A coiled-coil region spans residues 554 to 595 (LVCGLRQLANETTQALQLFLRATTELRTYTILNRKAIDFLLR). N563 carries an N-linked (GlcNAc...) asparagine; by host glycan. The stretch at 615–634 (WTKNITDKINQIIHDFIDNP) forms a coiled coil. An N-linked (GlcNAc...) asparagine; by host glycan is attached at N618. The chain crosses the membrane as a helical span at residues 651 to 671 (WIPAGIGITGIIIAIIALLCV). S-palmitoyl cysteine; by host attachment occurs at residues C670 and C672. Topologically, residues 672–676 (CKLLC) are cytoplasmic.

It belongs to the filoviruses glycoprotein family. As to quaternary structure, homotrimer; each monomer consists of a GP1 and a GP2 subunit linked by disulfide bonds. The resulting peplomers (GP1,2) protrude from the virus surface as spikes. Interacts with host integrin alpha-V/ITGAV. Interacts with host CLEC10A. Binds also to host CD209 and CLEC4M/DC-SIGN(R). Interacts with host FOLR1. Interacts with BST2; this interaction inhibits the antiviral effect of BST2 and this allows viral release from infected cells. Interacts with host FCN1; this interaction enhances viral entry. Interacts with host TLR4; this interaction induces cell death in T-lymphocytes or proinflammatory cytokines and SOCS1 production in monocytes. In terms of assembly, interacts with host entry receptor NPC1. GP1 and GP2delta are part of GP1,2delta soluble complexes released by ectodomain shedding. In terms of processing, the signal peptide region modulates GP's high mannose glycosylation, thereby determining the efficiency of the interactions with DC-SIGN(R). N-glycosylated. Post-translationally, O-glycosylated in the mucin-like region. In terms of processing, palmitoylation of GP2 is not required for its function. Specific enzymatic cleavages in vivo yield mature proteins. The precursor is processed into GP1 and GP2 by host cell furin in the trans Golgi, and maybe by other host proteases, to yield the mature GP1 and GP2 proteins. The cleavage site corresponds to the furin optimal cleavage sequence [KR]-X-[KR]-R. This cleavage does not seem to be required for function. After the internalization of the virus into cell endosomes, GP1 C-terminus is removed by the endosomal proteases cathepsin B, cathepsin L, or both, leaving a 19-kDa N-terminal fragment which is further digested by cathepsin B. Proteolytic processing of GP1,2 by host ADAM17 can remove the transmembrane anchor of GP2 and leads to shedding of complexes consisting in GP1 and truncated GP2 (GP1,2delta).

Its subcellular location is the virion membrane. The protein localises to the host cell membrane. The protein resides in the secreted. Its function is as follows. Trimeric GP1,2 complexes form the virion surface spikes and mediate the viral entry processes, with GP1 acting as the receptor-binding subunit and GP2 as the membrane fusion subunit. At later times of infection, down-regulates the expression of various host cell surface molecules that are essential for immune surveillance and cell adhesion. Down-modulates several integrins including ITGA1, ITGA2, ITGA3, ITGA4, ITGA5, ITGA6, ITGAV and ITGB1. This decrease in cell adhesion molecules may lead to cell detachment, contributing to the disruption of blood vessel integrity and hemorrhages developed during infection (cytotoxicity). Interacts with host TLR4 and thereby stimulates the differentiation and activation of monocytes leading to bystander death of T-lymphocytes. Down-regulates as well the function of host natural killer cells. Counteracts the antiviral effect of host BST2/tetherin that restricts release of progeny virions from infected cells. However, cooperates with VP40 and host BST2 to activate canonical NF-kappa-B pathway in a manner dependent on neddylation. Functions as a decoy for anti-GP1,2 antibodies thereby contributing to viral immune evasion. Interacts and activates host macrophages and dendritic cells inducing up-regulation of cytokine transcription. This effect is mediated throught activation of host TLR4. In terms of biological role, responsible for binding to the receptor(s) on target cells. Interacts with CD209/DC-SIGN and CLEC4M/DC-SIGNR which act as cofactors for virus entry into dendritic cells (DCs) and endothelial cells. Binding to the macrophage specific lectin CLEC10A also seem to enhance virus infectivity. Interaction with FOLR1/folate receptor alpha may be a cofactor for virus entry in some cell types, although results are contradictory. Members of the Tyro3 receptor tyrosine kinase family also seem to be cell entry factors in filovirus infection. Once attached, the virions are internalized through clathrin-dependent endocytosis and/or macropinocytosis. After internalization of the virus into the endosomes of the host cell, proteolysis of GP1 by two cysteine proteases, CTSB/cathepsin B and CTSL/cathepsin L removes the glycan cap and allows GP1 binding to the host entry receptor NPC1. NPC1-binding, Ca(2+) and acidic pH induce a conformational change of GP2, which unmasks its fusion peptide and permit membranes fusion. Functionally, acts as a class I viral fusion protein. Under the current model, the protein has at least 3 conformational states: pre-fusion native state, pre-hairpin intermediate state, and post-fusion hairpin state. During viral and target cell membrane fusion, the coiled coil regions (heptad repeats) assume a trimer-of-hairpins structure, positioning the fusion peptide in close proximity to the C-terminal region of the ectodomain. The formation of this structure appears to drive apposition and subsequent fusion of viral and target cell membranes. Responsible for penetration of the virus into the cell cytoplasm by mediating the fusion of the membrane of the endocytosed virus particle with the endosomal membrane. Low pH in endosomes induces an irreversible conformational change in GP2, releasing the fusion hydrophobic peptide. In Epomops franqueti (Franquet's epauletted fruit bat), this protein is Envelope glycoprotein (GP).